Here is a 429-residue protein sequence, read N- to C-terminus: MAQPGTLNLNNEVVKMRKEVKRIRVLVIRKLVRSVGRLKSKKGTEDALLKNQRRAQRLLEEIHAMKELKPDMVTKSALGDDINFEKICKKPDSTATERAIARLAVHPLLKKKIDVLKAAVQAFKEARQNVTEVESSKNASEDNHSKNTLYSNDNGSNLQREGTVISEQEVKETKILAKKPIHNSKEKIAKMEHGPKAVTIANSPSKPSEKDSVISLESQKTPADPKLKTLSQTKKNKESDSSLSGNSDGGEELCEEEKEYFDDSTEERFYKQSSMSEDSDSGDDFFIGKVRRTRKKESSCHSSVKEQKRLEKVFLKEDTGETHGDTRNDKTKPSTETRKLESVFFHSLSGSKSSRRNFKEQAPKTRSLDFPQNEPQFKNQFNKKLSRRLENTKQQLQLPLHPSWEASRRRKEQQSNIAVFQGKKITFDD.

Ala2 carries the post-translational modification N-acetylalanine. 2 coiled-coil regions span residues 42 to 67 (KGTE…AMKE) and 108 to 144 (LLKK…EDNH). 2 stretches are compositionally biased toward polar residues: residues 128–138 (QNVTEVESSKN) and 146–160 (KNTL…NLQR). Disordered regions lie at residues 128–285 (QNVT…GDDF) and 311–429 (EKVF…TFDD). Residues 183 to 195 (NSKEKIAKMEHGP) are compositionally biased toward basic and acidic residues. Residue Lys190 forms a Glycyl lysine isopeptide (Lys-Gly) (interchain with G-Cter in SUMO2) linkage. 5 positions are modified to phosphoserine: Ser203, Ser205, Ser264, Ser279, and Ser281. Positions 249-265 (GGEELCEEEKEYFDDST) are enriched in acidic residues. Residues 311–341 (EKVFLKEDTGETHGDTRNDKTKPSTETRKLE) show a composition bias toward basic and acidic residues. Residue Lys316 forms a Glycyl lysine isopeptide (Lys-Gly) (interchain with G-Cter in SUMO2) linkage. Phosphoserine occurs at positions 349, 351, and 367. Basic and acidic residues predominate over residues 357-367 (NFKEQAPKTRS). Residues 373–383 (NEPQFKNQFNK) are compositionally biased toward polar residues.

In terms of assembly, interacts with SRF. Forms complexes with SRF and SRF cofactors ARID2, MYOCD and NKX2-5. Interacts with the N-terminus of SLC2A4.

The protein resides in the cytoplasm. The protein localises to the perinuclear region. May be involved in regulating transcriptional activation of cardiac genes during the aging process. May play a role in biosynthesis and/or processing of SLC2A4 in adipose cells. The polypeptide is Serum response factor-binding protein 1 (Pongo abelii (Sumatran orangutan)).